The following is a 369-amino-acid chain: tRNA/tmRNA (uracil-C(5))-methyltransferase (369 aa).

S-adenosyl-L-methionine is bound by residues Q190, Y218, N223, E239, and D301. C326 functions as the Nucleophile in the catalytic mechanism. Residue E360 is the Proton acceptor of the active site.

The protein belongs to the class I-like SAM-binding methyltransferase superfamily. RNA M5U methyltransferase family. TrmA subfamily.

The enzyme catalyses uridine(54) in tRNA + S-adenosyl-L-methionine = 5-methyluridine(54) in tRNA + S-adenosyl-L-homocysteine + H(+). It catalyses the reaction uridine(341) in tmRNA + S-adenosyl-L-methionine = 5-methyluridine(341) in tmRNA + S-adenosyl-L-homocysteine + H(+). In terms of biological role, dual-specificity methyltransferase that catalyzes the formation of 5-methyluridine at position 54 (m5U54) in all tRNAs, and that of position 341 (m5U341) in tmRNA (transfer-mRNA). In Vibrio vulnificus (strain CMCP6), this protein is tRNA/tmRNA (uracil-C(5))-methyltransferase.